We begin with the raw amino-acid sequence, 876 residues long: E3 ubiquitin-protein ligase TRIM71 (876 aa).

An RING-type zinc finger spans residues cysteine 12–aspartate 90. Low complexity predominate over residues serine 26 to glycine 40. 2 disordered regions span residues serine 26–glycine 46 and lysine 128–leucine 192. Residues proline 137–alanine 148 are compositionally biased toward gly residues. Residues arginine 160 to serine 182 show a composition bias toward low complexity. The B box-type 1; atypical zinc-finger motif lies at glutamine 200 to phenylalanine 247. 8 residues coordinate Zn(2+): cysteine 205, cysteine 208, cysteine 229, histidine 233, cysteine 286, histidine 289, cysteine 309, and histidine 314. The segment at glutamate 281–leucine 322 adopts a B box-type 2 zinc-finger fold. 2 coiled-coil regions span residues arginine 344–lysine 373 and glutamine 399–arginine 434. One copy of the Filamin repeat lies at serine 487–valine 588. NHL repeat units lie at residues glycine 601–cysteine 644, histidine 648–glutamate 691, isoleucine 695–aspartate 738, leucine 742–aspartate 785, alanine 789–asparagine 832, and leucine 836–phenylalanine 876.

The protein belongs to the TRIM/RBCC family.

The protein resides in the cytoplasm. The protein localises to the P-body. The catalysed reaction is S-ubiquitinyl-[E2 ubiquitin-conjugating enzyme]-L-cysteine + [acceptor protein]-L-lysine = [E2 ubiquitin-conjugating enzyme]-L-cysteine + N(6)-ubiquitinyl-[acceptor protein]-L-lysine.. It participates in protein modification; protein ubiquitination. Its function is as follows. E3 ubiquitin-protein ligase that cooperates with the microRNAs (miRNAs) machinery and promotes embryonic stem cells proliferation and maintenance. Binds to miRNAs and participates in post-transcriptional repression of transcripts. Required to maintain proliferation and prevent premature differentiation of neural progenitor cells during early neural development. In Gallus gallus (Chicken), this protein is E3 ubiquitin-protein ligase TRIM71 (TRIM71).